The following is a 137-amino-acid chain: ATP synthase epsilon chain, chloroplastic (137 aa).

This sequence belongs to the ATPase epsilon chain family. As to quaternary structure, F-type ATPases have 2 components, CF(1) - the catalytic core - and CF(0) - the membrane proton channel. CF(1) has five subunits: alpha(3), beta(3), gamma(1), delta(1), epsilon(1). CF(0) has three main subunits: a, b and c.

Its subcellular location is the plastid. It localises to the chloroplast thylakoid membrane. In terms of biological role, produces ATP from ADP in the presence of a proton gradient across the membrane. This Agrostis stolonifera (Creeping bentgrass) protein is ATP synthase epsilon chain, chloroplastic.